Reading from the N-terminus, the 659-residue chain is Biosynthetic arginine decarboxylase (659 aa).

An N6-(pyridoxal phosphate)lysine modification is found at Lys-128. A substrate-binding site is contributed by 308-318 (FDVGGGLGVDY).

This sequence belongs to the Orn/Lys/Arg decarboxylase class-II family. SpeA subfamily. The cofactor is Mg(2+). It depends on pyridoxal 5'-phosphate as a cofactor.

It catalyses the reaction L-arginine + H(+) = agmatine + CO2. It functions in the pathway amine and polyamine biosynthesis; agmatine biosynthesis; agmatine from L-arginine: step 1/1. Functionally, catalyzes the biosynthesis of agmatine from arginine. This Yersinia pestis protein is Biosynthetic arginine decarboxylase.